The primary structure comprises 724 residues: 4-alpha-glucanotransferase (724 aa).

The protein belongs to the disproportionating enzyme family.

The protein resides in the cytoplasm. The enzyme catalyses Transfers a segment of a (1-&gt;4)-alpha-D-glucan to a new position in an acceptor, which may be glucose or a (1-&gt;4)-alpha-D-glucan.. The chain is 4-alpha-glucanotransferase (malQ) from Mycobacterium bovis (strain ATCC BAA-935 / AF2122/97).